A 231-amino-acid chain; its full sequence is Urease subunit gamma/beta (231 aa).

The segment at 1 to 101 (MLLTPTELER…LVTVHQPIRP (101 aa)) is urease gamma. A urease beta region spans residues 102–231 (GQLPLAVMPT…RARAQFFKGA (130 aa)).

It in the N-terminal section; belongs to the urease gamma subunit family. In the C-terminal section; belongs to the urease beta subunit family. Heterohexamer of 3 UreC (alpha) and 3 UreAB (gamma/beta) subunits.

The protein localises to the cytoplasm. The catalysed reaction is urea + 2 H2O + H(+) = hydrogencarbonate + 2 NH4(+). The protein operates within nitrogen metabolism; urea degradation; CO(2) and NH(3) from urea (urease route): step 1/1. This Pseudomonas syringae pv. syringae (strain B728a) protein is Urease subunit gamma/beta.